Reading from the N-terminus, the 430-residue chain is Functional amyloid transporter FapF (430 aa).

The signal sequence occupies residues 1-24 (MHRSLSLRAVVCLSTLLPASLLYA). Over 25-131 (APDVDIETLK…EASGFFGNGK (107 aa)) the chain is Periplasmic. Positions 29–64 (DIETLKQELLELKQRYEAQQKALAVLEQRVRQVEDQ) form a coiled coil. A disordered region spans residues 62–114 (EDQPATPAPKRLAKSPADFKQSGSTVAASSGTGGATGGSSYGQSLKDDSEPAQ). Positions 92 to 101 (GTGGATGGSS) are enriched in gly residues. The alpha helical plug stretch occupies residues 113 to 125 (AQSVSNLYNEASG). Residues 132–142 (FSFETGITYAR) form a beta stranded membrane-spanning segment. Over 143–172 (YDARQLTLNGFLALDSIFLGNINLDRIKAD) the chain is Extracellular. A beta stranded membrane pass occupies residues 173–183 (NWTLDLTGRYN). Topologically, residues 184–189 (LDNRWQ) are periplasmic. Residues 190–198 (FDVNVPVVY) traverse the membrane as a beta stranded segment. At 199 to 224 (RESTYQSGGASGGDPQATSEESVSRD) the chain is on the extracellular side. The disordered stretch occupies residues 203–223 (YQSGGASGGDPQATSEESVSR). The beta stranded transmembrane segment at 225 to 238 (PTIGDVNFGIAYKF) threads the bilayer. Residues 239 to 246 (LDESATMP) are Periplasmic-facing. The beta stranded transmembrane segment at 247 to 256 (DAVVSVRVKA) threads the bilayer. Residues 257 to 288 (PTGKEPFGIKLVRSTANDNLYVPESLPTGNGV) lie on the Extracellular side of the membrane. A beta stranded transmembrane segment spans residues 289–298 (WSITPGLSLV). Residues 299–304 (KTFDPA) lie on the Periplasmic side of the membrane. Residues 305 to 314 (VLFGSVSYTH) form a beta stranded membrane-spanning segment. The Extracellular portion of the chain corresponds to 315-339 (NLEDSFDDISSDVNQKVGGKVRLGD). Residues 340–348 (SFQFGVGVA) form a beta stranded membrane-spanning segment. Residues 349 to 356 (FALNERMS) are Periplasmic-facing. A beta stranded transmembrane segment spans residues 357–365 (MSFSVSDLI). The Extracellular segment spans residues 366–386 (QRKSKLKPDGGGWQSIVSSDA). A beta stranded membrane pass occupies residues 387–397 (NAGYFNVGMTI). The Periplasmic segment spans residues 398 to 404 (AASENLT). A beta stranded transmembrane segment spans residues 405–412 (IVPNLAIG). The Extracellular portion of the chain corresponds to 413-419 (MTDDAPD). A beta stranded transmembrane segment spans residues 420–428 (FTFSLKFPY). The Periplasmic segment spans residues 429 to 430 (YF).

The protein belongs to the amyloid transporter (TC 9.B.153) family. As to quaternary structure, homotrimer.

It localises to the cell outer membrane. In terms of biological role, transports fibril components across the outer membrane. Upon overexpression of the endogenous six-gene locus (fapA-fapF) in situ cells form large clumps during liquid growth, make large amounts of biofilm and produce amyloid fibrils. Expression of the 6 gene operon in E.coli strain BL21(DE3) induces flocculation and biofilm formation with copious extracellular fibrils. The sequence is that of Functional amyloid transporter FapF from Pseudomonas fluorescens.